The sequence spans 610 residues: 1,8-cineol synthase, chloroplastic (610 aa).

Residues 1 to 51 constitute a chloroplast transit peptide; it reads MNHHLIITPIFHLQIMLPVATLKRPPPPAATCSIYSFSRGTPSLVSKARLS. Residues Arg322, Asp359, Asp363, Arg500, and Asn503 each contribute to the (2E)-geranyl diphosphate site. The Mg(2+) site is built by Asp359 and Asp363. The DDXXD motif motif lies at 359 to 363; the sequence is DDVYD. Mg(2+)-binding residues include Asn503, Thr507, and Glu511.

It belongs to the terpene synthase family. Tpsb subfamily. In terms of assembly, monomer. The cofactor is Mg(2+). It depends on Mn(2+) as a cofactor. Confined to buds and flowers.

The protein resides in the plastid. Its subcellular location is the chloroplast. The enzyme catalyses (2E)-geranyl diphosphate + H2O = 1,8-cineole + diphosphate. It catalyses the reaction (2E)-geranyl diphosphate = limonene + diphosphate. It carries out the reaction (2E)-geranyl diphosphate = sabinene + diphosphate. The catalysed reaction is (2E)-geranyl diphosphate = (E)-beta-ocimene + diphosphate. The enzyme catalyses (2E)-geranyl diphosphate = beta-myrcene + diphosphate. It catalyses the reaction (2E)-geranyl diphosphate = alpha-pinene + diphosphate. It carries out the reaction (2E)-geranyl diphosphate + H2O = (S)-alpha-terpineol + diphosphate. It participates in secondary metabolite biosynthesis; terpenoid biosynthesis. In terms of biological role, monoterpene synthase involved in the biosynthesis of monoterpene natural products of the 'cineole cassette', volatile compounds present in floral scent. Catalyzes the conversion of (2E)-geranyl diphosphate (GPP) into 1,8-cineole and, as minor products, limonene, sabinene, (E)-beta-ocimene, beta-myrcene, alpha-pinene and alpha-terpineol. The chain is 1,8-cineol synthase, chloroplastic from Nicotiana suaveolens (Australian tobacco).